The following is a 643-amino-acid chain: MKIHIVQKGDTLWKIAKKYGVDFDTLKKTNTQLSNPDLIMPGMKIKVPSKSVHMKQQAGAGSAPPKQYVKEVQQKEFAATPTPLGIEDEEEVTYQSAPITQQPAMQQTQKEVQIKPQKEMQVKPQKEVQVKPQKEMQVKPQKEVQKEQPIQKEKPVEKPSVIQKPPVIEKQKPAEKENTKFSVNVLPQPPQPPIKPKKEYKISDVIKKGSELIAPQISKMKPNNIISPQTKKNNIISPQVKKENVGNIVSPQVKKENVGNIVSPQVKKENVGNIVSPQVKKENVGNIVSPQVKKENVGNIVSPQVKKENVGNIVSPQVKKENVGNIVSPNVSKENVVIPQVIPPNIQMPNIMPIMDNNQPPNIMPIMDNNQPPNIMPIMDNNQMPNMMPIMDNNQMPNMMPIMDNNQMPNMMPIMDNNQMPNMMPIMDNNQMPNMMPIMDNNQMPNMMPIMDNNQMPNMMPIMDNNQMPNIMPIMDNNQMPNMMPIMDNNQMPNIMPIMDNNQMPNMMPIMDNNQPPNMMPYQMPYQQPMMPPNPYYQQPNPYQMPYQQGAPFGPQHTSMPNQNMMPMDNNMPPLVQGEEDCGCGGESRLYSPQPGGPQYANPLYYQPTQSAYAPQPGTMYYQPDPPNVFGEPVSEEEDEEEV.

One can recognise a LysM domain in the interval 2–47 (KIHIVQKGDTLWKIAKKYGVDFDTLKKTNTQLSNPDLIMPGMKIKV). 25 consecutive repeat copies span residues 113–120 (QIKPQKEM), 121–128 (QVKPQKEV), 129–136 (QVKPQKEM), 137–144 (QVKPQKEV), 238–250 (PQVK…NIVS), 251–263 (PQVK…NIVS), 264–276 (PQVK…NIVS), 277–289 (PQVK…NIVS), 290–302 (PQVK…NIVS), 303–315 (PQVK…NIVS), 316–328 (PQVK…NIVS), 354–365 (IMDNNQPPNIMP), 366–377 (IMDNNQPPNIMP), 378–389 (IMDNNQMPNMMP), 390–401 (IMDNNQMPNMMP), 402–413 (IMDNNQMPNMMP), 414–425 (IMDNNQMPNMMP), 426–437 (IMDNNQMPNMMP), 438–449 (IMDNNQMPNMMP), 450–461 (IMDNNQMPNMMP), 462–473 (IMDNNQMPNIMP), 474–485 (IMDNNQMPNMMP), 486–497 (IMDNNQMPNIMP), 498–509 (IMDNNQMPNMMP), and 510–521 (IMDNNQPPNMMP). Residues 113–144 (QIKPQKEMQVKPQKEVQVKPQKEMQVKPQKEV) form a 4 X 8 AA tandem repeats of Q-[IV]-K-P-Q-K-E-[MV] region. The span at 115–157 (KPQKEMQVKPQKEVQVKPQKEMQVKPQKEVQKEQPIQKEKPVE) shows a compositional bias: basic and acidic residues. The interval 115–160 (KPQKEMQVKPQKEVQVKPQKEMQVKPQKEVQKEQPIQKEKPVEKPS) is disordered. Positions 238 to 328 (PQVKKENVGN…KKENVGNIVS (91 aa)) are 7 X 13 AA tandem repeats of P-Q-V-K-K-E-N-V-G-N-I-V-S. The interval 354–521 (IMDNNQPPNI…DNNQPPNMMP (168 aa)) is 14 X 12 AA tandem repeats of I-M-D-N-N-Q-[MP]-P-N-[IM]-M-P. The disordered stretch occupies residues 585 to 643 (GGESRLYSPQPGGPQYANPLYYQPTQSAYAPQPGTMYYQPDPPNVFGEPVSEEEDEEEV). Positions 634 to 643 (VSEEEDEEEV) are enriched in acidic residues.

It to B.subtilis SafA.

Functionally, required for the normal assembly and anchoring of both the spore coat and the exosporium layers. This is Spore coat assembly protein ExsA (exsA) from Bacillus cereus.